Reading from the N-terminus, the 210-residue chain is Large ribosomal subunit protein uL3 (210 aa).

Residues 131-140 (NRASHGNSLS) are compositionally biased toward polar residues. Residues 131–150 (NRASHGNSLSHRAPGSIGCR) form a disordered region. Gln-151 is subject to N5-methylglutamine.

The protein belongs to the universal ribosomal protein uL3 family. In terms of assembly, part of the 50S ribosomal subunit. Forms a cluster with proteins L14 and L19. Methylated by PrmB.

Its function is as follows. One of the primary rRNA binding proteins, it binds directly near the 3'-end of the 23S rRNA, where it nucleates assembly of the 50S subunit. The sequence is that of Large ribosomal subunit protein uL3 from Acidithiobacillus ferrooxidans (strain ATCC 23270 / DSM 14882 / CIP 104768 / NCIMB 8455) (Ferrobacillus ferrooxidans (strain ATCC 23270)).